Reading from the N-terminus, the 356-residue chain is Nitrilase, arylacetone-specific (356 aa).

A CN hydrolase domain is found at 7-280 (VRAAAVQAAS…EGLIIADLNM (274 aa)). The Proton acceptor role is filled by glutamate 47. Lysine 129 functions as the Proton donor in the catalytic mechanism. Cysteine 163 (nucleophile) is an active-site residue. Positions 324–356 (QEEAPEPHVQSTAAPVAVSQTQDSDTLLVQEPS) are disordered. The span at 332–356 (VQSTAAPVAVSQTQDSDTLLVQEPS) shows a compositional bias: polar residues.

Belongs to the carbon-nitrogen hydrolase superfamily. Nitrilase family. In terms of assembly, homohexamer.

The catalysed reaction is a nitrile + 2 H2O = a carboxylate + NH4(+). In terms of biological role, nitrilase that acts mostly on arylacetonitriles. In Alcaligenes faecalis, this protein is Nitrilase, arylacetone-specific.